We begin with the raw amino-acid sequence, 274 residues long: Malonyl-[acyl-carrier protein] O-methyltransferase (274 aa).

It belongs to the methyltransferase superfamily.

The enzyme catalyses malonyl-[ACP] + S-adenosyl-L-methionine = malonyl-[ACP] methyl ester + S-adenosyl-L-homocysteine. It participates in cofactor biosynthesis; biotin biosynthesis. Its function is as follows. Converts the free carboxyl group of a malonyl-thioester to its methyl ester by transfer of a methyl group from S-adenosyl-L-methionine (SAM). It allows to synthesize pimeloyl-ACP via the fatty acid synthetic pathway. In Priestia megaterium (strain DSM 319 / IMG 1521) (Bacillus megaterium), this protein is Malonyl-[acyl-carrier protein] O-methyltransferase.